The following is a 573-amino-acid chain: NEDD4-binding protein 3-B (573 aa).

3 disordered regions span residues 119–138 (EFSKSSLPERGHSDKSRFGP), 173–220 (CVGS…NSYS), and 384–405 (GENEELRQKQSQSDNSGPNLED). Basic and acidic residues predominate over residues 125 to 135 (LPERGHSDKSR). The segment covering 186-196 (SNSHSNNPSES) has biased composition (low complexity). 2 stretches are compositionally biased toward polar residues: residues 207–220 (DSKQNSINSLNSYS) and 392–401 (KQSQSDNSGP). The stretch at 287-474 (ESVEDVARQL…CLQALEDVKS (188 aa)) forms a coiled coil.

It belongs to the N4BP3 family.

The protein localises to the cytoplasmic vesicle. Its subcellular location is the cell projection. It localises to the axon. The protein resides in the dendrite. Plays a role in axon and dendrite arborization during cranial nerve development. Also important for neural crest migration and early development of other anterior structures including eye, brain and cranial cartilage. The sequence is that of NEDD4-binding protein 3-B from Xenopus laevis (African clawed frog).